We begin with the raw amino-acid sequence, 234 residues long: Ribonuclease 3 (234 aa).

Positions 6-134 (RKSLEERVGH…IVGALYLDGG (129 aa)) constitute an RNase III domain. Glutamate 47 contributes to the Mg(2+) binding site. The active site involves aspartate 51. The Mg(2+) site is built by serine 120 and glutamate 123. Glutamate 123 is an active-site residue. The region spanning 162–231 (DYKTRLQELV…AKNALEMKYK (70 aa)) is the DRBM domain.

Belongs to the ribonuclease III family. Homodimer. Mg(2+) is required as a cofactor.

The protein resides in the cytoplasm. The enzyme catalyses Endonucleolytic cleavage to 5'-phosphomonoester.. Its function is as follows. Digests double-stranded RNA. Involved in the processing of primary rRNA transcript to yield the immediate precursors to the large and small rRNAs (23S and 16S). Processes some mRNAs, and tRNAs when they are encoded in the rRNA operon. Processes pre-crRNA and tracrRNA of type II CRISPR loci if present in the organism. This chain is Ribonuclease 3, found in Bdellovibrio bacteriovorus (strain ATCC 15356 / DSM 50701 / NCIMB 9529 / HD100).